The following is a 535-amino-acid chain: Bifunctional purine biosynthesis protein PurH (535 aa).

Residues 6–151 (TRLPVRRALI…KNHKDVAIVV (146 aa)) enclose the MGS-like domain.

The protein belongs to the PurH family.

It catalyses the reaction (6R)-10-formyltetrahydrofolate + 5-amino-1-(5-phospho-beta-D-ribosyl)imidazole-4-carboxamide = 5-formamido-1-(5-phospho-D-ribosyl)imidazole-4-carboxamide + (6S)-5,6,7,8-tetrahydrofolate. It carries out the reaction IMP + H2O = 5-formamido-1-(5-phospho-D-ribosyl)imidazole-4-carboxamide. It functions in the pathway purine metabolism; IMP biosynthesis via de novo pathway; 5-formamido-1-(5-phospho-D-ribosyl)imidazole-4-carboxamide from 5-amino-1-(5-phospho-D-ribosyl)imidazole-4-carboxamide (10-formyl THF route): step 1/1. It participates in purine metabolism; IMP biosynthesis via de novo pathway; IMP from 5-formamido-1-(5-phospho-D-ribosyl)imidazole-4-carboxamide: step 1/1. The chain is Bifunctional purine biosynthesis protein PurH from Ectopseudomonas mendocina (strain ymp) (Pseudomonas mendocina).